We begin with the raw amino-acid sequence, 447 residues long: Na(+)-translocating NADH-quinone reductase subunit A (447 aa).

This sequence belongs to the NqrA family. Composed of six subunits; NqrA, NqrB, NqrC, NqrD, NqrE and NqrF.

It carries out the reaction a ubiquinone + n Na(+)(in) + NADH + H(+) = a ubiquinol + n Na(+)(out) + NAD(+). Its function is as follows. NQR complex catalyzes the reduction of ubiquinone-1 to ubiquinol by two successive reactions, coupled with the transport of Na(+) ions from the cytoplasm to the periplasm. NqrA to NqrE are probably involved in the second step, the conversion of ubisemiquinone to ubiquinol. The polypeptide is Na(+)-translocating NADH-quinone reductase subunit A (Haemophilus influenzae (strain PittEE)).